An 899-amino-acid polypeptide reads, in one-letter code: Valine--tRNA ligase (899 aa).

A 'HIGH' region motif is present at residues 60-70 (PNVTGVLHMGH). Residues 539–543 (KMSKS) carry the 'KMSKS' region motif. Lys-542 serves as a coordination point for ATP. The stretch at 827–898 (AGLIDLDEEQ…KQGLEKLAAL (72 aa)) forms a coiled coil.

This sequence belongs to the class-I aminoacyl-tRNA synthetase family. ValS type 1 subfamily. As to quaternary structure, monomer.

Its subcellular location is the cytoplasm. The enzyme catalyses tRNA(Val) + L-valine + ATP = L-valyl-tRNA(Val) + AMP + diphosphate. Catalyzes the attachment of valine to tRNA(Val). As ValRS can inadvertently accommodate and process structurally similar amino acids such as threonine, to avoid such errors, it has a 'posttransfer' editing activity that hydrolyzes mischarged Thr-tRNA(Val) in a tRNA-dependent manner. The chain is Valine--tRNA ligase from Syntrophotalea carbinolica (strain DSM 2380 / NBRC 103641 / GraBd1) (Pelobacter carbinolicus).